Reading from the N-terminus, the 196-residue chain is Mpv17-like protein (196 aa).

Residues 1–16 lie on the Cytoplasmic side of the membrane; the sequence is MVSWWQALTRAAGRYP. The segment at 16–55 is targeting to peroxisomes; it reads PWPANVLLYAGFFSGGDALQQVLRGGPADWQHTRHVATVA. Residues 17–34 traverse the membrane as a helical segment; it reads WPANVLLYAGFFSGGDAL. At 35 to 50 the chain is on the lumenal side; sequence QQVLRGGPADWQHTRH. The chain crosses the membrane as a helical span at residues 51-67; it reads VATVAVAFHANLNYVWL. The Cytoplasmic portion of the chain corresponds to 68 to 90; sequence NLLERALPGRAPRTILAKVLCDQ. A helical membrane pass occupies residues 91 to 108; that stretch reads ALGGPVYVSTFYAGMSIL. Over 109–150 the chain is Lumenal; the sequence is QGKDDIFLDMRQKFWNTYKSGLMYWPFVQLINFSLIPIRWRT. A helical transmembrane segment spans residues 151-167; the sequence is AYTGLCGFLWATFLCFS. Over 168–196 the chain is Cytoplasmic; sequence QQEGDGTFKSAFTFRRIKVTNEVEKPSEK.

It belongs to the peroxisomal membrane protein PXMP2/4 family.

The protein resides in the peroxisome membrane. Participates in reactive oxygen species metabolism by up- or down-regulation of the genes of antioxidant enzymes. Protective against the mitochondrial apoptotic cascade. The polypeptide is Mpv17-like protein (MPV17L) (Bos taurus (Bovine)).